Reading from the N-terminus, the 455-residue chain is Bifunctional protein GlmU (455 aa).

Residues 1–227 (MGLSVIILAA…CEEVQGVNDR (227 aa)) are pyrophosphorylase. Residues 8–11 (LAAG), K22, Q73, 78–79 (GT), 100–102 (YGD), G137, E152, N167, and N225 each bind UDP-N-acetyl-alpha-D-glucosamine. D102 is a Mg(2+) binding site. Residue N225 coordinates Mg(2+). The interval 228-248 (WELTKLERYYQRLMAKKLSLA) is linker. The N-acetyltransferase stretch occupies residues 249–455 (GVTIIDPERF…KGWHRPTKKE (207 aa)). Residues R332 and K350 each contribute to the UDP-N-acetyl-alpha-D-glucosamine site. Catalysis depends on H362, which acts as the Proton acceptor. 2 residues coordinate UDP-N-acetyl-alpha-D-glucosamine: Y365 and N376. Acetyl-CoA contacts are provided by residues A379, 385–386 (NY), S404, A422, and R439.

It in the N-terminal section; belongs to the N-acetylglucosamine-1-phosphate uridyltransferase family. The protein in the C-terminal section; belongs to the transferase hexapeptide repeat family. As to quaternary structure, homotrimer. Mg(2+) serves as cofactor.

The protein resides in the cytoplasm. The enzyme catalyses alpha-D-glucosamine 1-phosphate + acetyl-CoA = N-acetyl-alpha-D-glucosamine 1-phosphate + CoA + H(+). It catalyses the reaction N-acetyl-alpha-D-glucosamine 1-phosphate + UTP + H(+) = UDP-N-acetyl-alpha-D-glucosamine + diphosphate. It participates in nucleotide-sugar biosynthesis; UDP-N-acetyl-alpha-D-glucosamine biosynthesis; N-acetyl-alpha-D-glucosamine 1-phosphate from alpha-D-glucosamine 6-phosphate (route II): step 2/2. The protein operates within nucleotide-sugar biosynthesis; UDP-N-acetyl-alpha-D-glucosamine biosynthesis; UDP-N-acetyl-alpha-D-glucosamine from N-acetyl-alpha-D-glucosamine 1-phosphate: step 1/1. Its pathway is bacterial outer membrane biogenesis; LPS lipid A biosynthesis. Functionally, catalyzes the last two sequential reactions in the de novo biosynthetic pathway for UDP-N-acetylglucosamine (UDP-GlcNAc). The C-terminal domain catalyzes the transfer of acetyl group from acetyl coenzyme A to glucosamine-1-phosphate (GlcN-1-P) to produce N-acetylglucosamine-1-phosphate (GlcNAc-1-P), which is converted into UDP-GlcNAc by the transfer of uridine 5-monophosphate (from uridine 5-triphosphate), a reaction catalyzed by the N-terminal domain. This Coxiella burnetii (strain CbuG_Q212) (Coxiella burnetii (strain Q212)) protein is Bifunctional protein GlmU.